The chain runs to 1114 residues: MAKATSGAAGLRLLLLLLLPLLGKVALGLYFSRDAYWEKLYVDQAAGTPLLYVHALRDAPEEVPSFRLGQHLYGTYRTRLHENNWICIQEDTGLLYLNRSLDHSSWEKLSVRNRGFPLLTVYLKVFLSPTSLREGECQWPGCARVYFSFFNTSFPACSSLKPRELCFPETRPSFRIRENRPPGTFHQFRLLPVQFLCPNISVAYRLLEGEGLPFRCAPDSLEVSTRWALDREQREKYELVAVCTVHAGAREEVVMVPFPVTVYDEDDSAPTFPAGVDTASAVVEFKRKEDTVVATLRVFDADVVPASGELVRRYTSTLLPGDTWAQQTFRVEHWPNETSVQANGSFVRATVHDYRLVLNRNLSISENRTMQLAVLVNDSDFQGPGAGVLLLHFNVSVLPVSLHLPSTYSLSVSRRARRFAQIGKVCVENCQAFSGINVQYKLHSSGANCSTLGVVTSAEDTSGILFVNDTKALRRPKCAELHYMVVATDQQTSRQAQAQLLVTVEGSYVAEEAGCPLSCAVSKRRLECEECGGLGSPTGRCEWRQGDGKGITRNFSTCSPSTKTCPDGHCDVVETQDINICPQDCLRGSIVGGHEPGEPRGIKAGYGTCNCFPEEEKCFCEPEDIQDPLCDELCRTVIAAAVLFSFIVSVLLSAFCIHCYHKFAHKPPISSAEMTFRRPAQAFPVSYSSSGARRPSLDSMENQVSVDAFKILEDPKWEFPRKNLVLGKTLGEGEFGKVVKATAFHLKGRAGYTTVAVKMLKENASPSELRDLLSEFNVLKQVNHPHVIKLYGACSQDGPLLLIVEYAKYGSLRGFLRESRKVGPGYLGSGGSRNSSSLDHPDERALTMGDLISFAWQISQGMQYLAEMKLVHRDLAARNILVAEGRKMKISDFGLSRDVYEEDSYVKRSQGRIPVKWMAIESLFDHIYTTQSDVWSFGVLLWEIVTLGGNPYPGIPPERLFNLLKTGHRMERPDNCSEEMYRLMLQCWKQEPDKRPVFADISKDLEKMMVKRRDYLDLAASTPSDSLIYDDGLSEEETPLVDCNNAPLPRALPSTWIENKLYGMSDPNWPGESPVPLTRADGTNTGFPRYPNDSVYANWMLSPSAAKLMDTFDS.

Residues 1–28 (MAKATSGAAGLRLLLLLLLPLLGKVALG) form the signal peptide. Residues 29–153 (LYFSRDAYWE…RVYFSFFNTS (125 aa)) form a cadherin-like region 1 (CLD1) region. Over 29–635 (LYFSRDAYWE…QDPLCDELCR (607 aa)) the chain is Extracellular. Asparagine 98 carries an N-linked (GlcNAc...) asparagine glycan. An intrachain disulfide couples cysteine 137 to cysteine 142. The N-linked (GlcNAc...) asparagine glycan is linked to asparagine 151. 2 disulfide bridges follow: cysteine 157–cysteine 197 and cysteine 166–cysteine 243. The region spanning 168 to 272 (PETRPSFRIR…YDEDDSAPTF (105 aa)) is the Cadherin domain. Ca(2+) is bound by residues glutamate 178 and asparagine 179. Asparagine 199 carries N-linked (GlcNAc...) asparagine glycosylation. The Ca(2+) site is built by aspartate 230, glutamate 232, aspartate 264, glutamate 265, aspartate 266, aspartate 267, serine 268, aspartate 300, and aspartate 302. A cadherin-like region 3 (CLD3) region spans residues 265-379 (EDDSAPTFPA…MQLAVLVNDS (115 aa)). Asparagine 336, asparagine 343, asparagine 361, asparagine 367, and asparagine 377 each carry an N-linked (GlcNAc...) asparagine glycan. Ca(2+) is bound at residue aspartate 378. An N-linked (GlcNAc...) asparagine glycan is attached at asparagine 394. The tract at residues 405-506 (PSTYSLSVSR…QAQLLVTVEG (102 aa)) is cadherin-like region 4 (CLD4). Cysteine 426 and cysteine 430 are oxidised to a cystine. Asparagine 448 and asparagine 468 each carry an N-linked (GlcNAc...) asparagine glycan. 4 cysteine pairs are disulfide-bonded: cysteine 449-cysteine 478, cysteine 515-cysteine 531, cysteine 519-cysteine 541, and cysteine 528-cysteine 558. An N-linked (GlcNAc...) asparagine glycan is attached at asparagine 554. Threonine 564, cysteine 565, aspartate 567, histidine 569, glutamate 574, and aspartate 584 together coordinate Ca(2+). 5 disulfides stabilise this stretch: cysteine 565–cysteine 581, cysteine 570–cysteine 585, cysteine 609–cysteine 620, cysteine 611–cysteine 618, and cysteine 630–cysteine 634. The chain crosses the membrane as a helical span at residues 636–657 (TVIAAAVLFSFIVSVLLSAFCI). Residues 658-1114 (HCYHKFAHKP…AAKLMDTFDS (457 aa)) lie on the Cytoplasmic side of the membrane. Tyrosine 687 carries the post-translational modification Phosphotyrosine; by autocatalysis. The O-linked (GlcNAc) serine glycan is linked to serine 688. The residue at position 696 (serine 696) is a Phosphoserine. The region spanning 724–1016 (LVLGKTLGEG…KMMVKRRDYL (293 aa)) is the Protein kinase domain. ATP-binding positions include 730-738 (LGEGEFGKV) and lysine 758. 805-807 (EYA) contributes to the semaxanib binding site. A phosphotyrosine; by autocatalysis mark is found at tyrosine 806, tyrosine 809, and tyrosine 826. The active-site Proton acceptor is the aspartate 874. Residues tyrosine 900, tyrosine 905, tyrosine 981, tyrosine 1015, tyrosine 1029, tyrosine 1062, tyrosine 1090, and tyrosine 1096 each carry the phosphotyrosine; by autocatalysis modification.

This sequence belongs to the protein kinase superfamily. Tyr protein kinase family. As to quaternary structure, phosphorylated form interacts with the PBT domain of DOK2, DOK4 and DOK5. The phosphorylated form interacts with PLCG1 and GRB7. Interacts (not phosphorylated) with PTK2/FAK1 (via FERM domain). Extracellular cell-membrane anchored RET cadherin fragments form complex in neurons with reduced trophic status, preferentially at the contact sites between somas. Interacts with AIP in the pituitary gland; this interaction prevents the formation of the AIP-survivin complex. Interacts (inactive) with CBLC and CD2AP; dissociates upon activation by GDNF which increases CBLC:CD2AP interaction. Ca(2+) serves as cofactor. Autophosphorylated on C-terminal tyrosine residues upon ligand stimulation. In terms of processing, proteolytically cleaved by caspase-3. The soluble RET kinase fragment is able to induce cell death. The extracellular cell-membrane anchored RET cadherin fragment accelerates cell adhesion in sympathetic neurons.

The protein resides in the cell membrane. The protein localises to the endosome membrane. The enzyme catalyses L-tyrosyl-[protein] + ATP = O-phospho-L-tyrosyl-[protein] + ADP + H(+). Repressed by 4-(3-hydroxyanilino)-quinolines derivatives, indolin-2-one-derivatives, 2-(alkylsulfanyl)-4-(3-thienyl) nicotinonitrile analogs, 3- and 4-substituted beta-carbolin-1-ones, vandetanib, motesanib, sorafenib (BAY 43-9006), cabozantinib (XL184), lenvatinib, sunitinib, nintedanib, and withaferin A (WA). Inactivation by sorafenib both reduces kinase activity and promotes lysosomal degradation. In terms of biological role, receptor tyrosine-protein kinase involved in numerous cellular mechanisms including cell proliferation, neuronal navigation, cell migration, and cell differentiation in response to glia cell line-derived growth family factors (GDNF, NRTN, ARTN, PSPN and GDF15). In contrast to most receptor tyrosine kinases, RET requires not only its cognate ligands but also coreceptors, for activation. GDNF ligands (GDNF, NRTN, ARTN, PSPN and GDF15) first bind their corresponding GDNFR coreceptors (GFRA1, GFRA2, GFRA3, GFRA4 and GFRAL, respectively), triggering RET autophosphorylation and activation, leading to activation of downstream signaling pathways, including the MAPK- and AKT-signaling pathways. Acts as a dependence receptor via the GDNF-GFRA1 signaling: in the presence of the ligand GDNF in somatotrophs within pituitary, promotes survival and down regulates growth hormone (GH) production, but triggers apoptosis in absence of GDNF. Required for the molecular mechanisms orchestration during intestine organogenesis via the ARTN-GFRA3 signaling: involved in the development of enteric nervous system and renal organogenesis during embryonic life, and promotes the formation of Peyer's patch-like structures, a major component of the gut-associated lymphoid tissue. Mediates, through interaction with GDF15-receptor GFRAL, GDF15-induced cell-signaling in the brainstem which triggers an aversive response, characterized by nausea, vomiting, and/or loss of appetite in response to various stresses. Modulates cell adhesion via its cleavage by caspase in sympathetic neurons and mediates cell migration in an integrin (e.g. ITGB1 and ITGB3)-dependent manner. Also active in the absence of ligand, triggering apoptosis through a mechanism that requires receptor intracellular caspase cleavage. Triggers the differentiation of rapidly adapting (RA) mechanoreceptors. Involved in the development of the neural crest. Regulates nociceptor survival and size. Phosphorylates PTK2/FAK1. Functionally, isoform 1 in complex with GFRAL induces higher activation of MAPK-signaling pathway than isoform 2 in complex with GFRAL. This Homo sapiens (Human) protein is Proto-oncogene tyrosine-protein kinase receptor Ret.